Reading from the N-terminus, the 472-residue chain is Flotillin-like protein 6 (472 aa).

The S-palmitoyl cysteine moiety is linked to residue cysteine 37. Residues 237-327 are a coiled coil; sequence ENQREAEVAQ…ELYKKQKEAE (91 aa).

Belongs to the band 7/mec-2 family. Flotillin subfamily. May be palmitoylated. As to expression, very low occasional expression in roots and nodules.

It localises to the cell membrane. Its subcellular location is the membrane. The protein localises to the caveola. Its function is as follows. May act as a scaffolding protein within caveolar membranes, functionally participating in formation of caveolae or caveolae-like vesicles. May be involved in nodule formation. In Medicago truncatula (Barrel medic), this protein is Flotillin-like protein 6 (FLOT6).